Here is a 285-residue protein sequence, read N- to C-terminus: Bifunctional protein FolD (285 aa).

NADP(+)-binding positions include 166-168, Ser-191, and Thr-232; that span reads GRS.

The protein belongs to the tetrahydrofolate dehydrogenase/cyclohydrolase family. As to quaternary structure, homodimer.

The catalysed reaction is (6R)-5,10-methylene-5,6,7,8-tetrahydrofolate + NADP(+) = (6R)-5,10-methenyltetrahydrofolate + NADPH. It catalyses the reaction (6R)-5,10-methenyltetrahydrofolate + H2O = (6R)-10-formyltetrahydrofolate + H(+). Its pathway is one-carbon metabolism; tetrahydrofolate interconversion. Catalyzes the oxidation of 5,10-methylenetetrahydrofolate to 5,10-methenyltetrahydrofolate and then the hydrolysis of 5,10-methenyltetrahydrofolate to 10-formyltetrahydrofolate. The sequence is that of Bifunctional protein FolD from Chloroflexus aggregans (strain MD-66 / DSM 9485).